We begin with the raw amino-acid sequence, 274 residues long: Large ribosomal subunit protein uL2cz/uL2cy (274 aa).

Disordered regions lie at residues 1–25 and 223–274; these read MAIH…VKSN and MNPV…RRTK.

The protein belongs to the universal ribosomal protein uL2 family. In terms of assembly, part of the 50S ribosomal subunit.

It localises to the plastid. It is found in the chloroplast. This chain is Large ribosomal subunit protein uL2cz/uL2cy (rpl2-A), found in Citrus sinensis (Sweet orange).